The sequence spans 80 residues: Venom protein HGE029 (80 aa).

The N-terminal stretch at 1 to 22 (MNAKAFLAIFMIALLITDRAEA) is a signal peptide.

It belongs to the non-disulfide-bridged peptide (NDBP) superfamily. Long chain multifunctional peptide (group 2) family. Expressed by the venom gland.

The protein resides in the secreted. The polypeptide is Venom protein HGE029 (Hoffmannihadrurus gertschi (Scorpion)).